The primary structure comprises 245 residues: Bis(5'-nucleosyl)-tetraphosphatase PrpE [asymmetrical] (245 aa).

Belongs to the PrpE family. Requires Ni(2+) as cofactor.

The catalysed reaction is P(1),P(4)-bis(5'-guanosyl) tetraphosphate + H2O = GMP + GTP + 2 H(+). Functionally, asymmetrically hydrolyzes Ap4p to yield AMP and ATP. This is Bis(5'-nucleosyl)-tetraphosphatase PrpE [asymmetrical] from Geobacillus thermodenitrificans (strain NG80-2).